Consider the following 754-residue polypeptide: Catalase-peroxidase (754 aa).

Residues methionine 1–aspartate 29 are disordered. Residues arginine 7–glutamate 23 are compositionally biased toward basic residues. The active-site Tryptophan radical intermediate is the tryptophan 106. Positions tryptophan 122–tyrosine 249 form a cross-link, tryptophyl-tyrosyl-methioninium (Trp-Tyr) (with M-275). Histidine 123 (proton acceptor) is an active-site residue. The segment at residues tyrosine 249–methionine 275 is a cross-link (tryptophyl-tyrosyl-methioninium (Tyr-Met) (with W-122)). Heme b is bound at residue histidine 290.

This sequence belongs to the peroxidase family. Peroxidase/catalase subfamily. Homodimer. Heme b is required as a cofactor. Post-translationally, formation of the three residue Trp-Tyr-Met cross-link is important for the catalase, but not the peroxidase activity of the enzyme.

It catalyses the reaction H2O2 + AH2 = A + 2 H2O. The enzyme catalyses 2 H2O2 = O2 + 2 H2O. Bifunctional enzyme with both catalase and broad-spectrum peroxidase activity. Also displays NADH oxidase, isoniazid hydrazine lyase and isonicotinoyl-NAD synthase activities. This chain is Catalase-peroxidase, found in Synechocystis sp. (strain ATCC 27184 / PCC 6803 / Kazusa).